Here is a 232-residue protein sequence, read N- to C-terminus: MSLTDTIRNTFVPIHREGYPFIAGFFVVSLILGWLWDPLFWIGMVLTVWCIYFYRDPERVTPMDDDLVISPADGKVSFVGPAVPPAELDLGAEPRMRVSVFMNVFSVHINRSPVRGKIEKVVHRPGKFLNAELDKASTENERNSVLIESPHGKIGVVQIAGLVARRIVCWSNEDDDLSVGERFGLIRFGSRVDVYLPADATVRVAVGQTAVAGETVLADYGSVRGEPVVRIG.

Catalysis depends on Ser-190, which acts as the Schiff-base intermediate with substrate; via pyruvic acid. At Ser-190 the chain carries Pyruvic acid (Ser); by autocatalysis.

It belongs to the phosphatidylserine decarboxylase family. PSD-A subfamily. In terms of assembly, heterodimer of a large membrane-associated beta subunit and a small pyruvoyl-containing alpha subunit. Requires pyruvate as cofactor. Post-translationally, is synthesized initially as an inactive proenzyme. Formation of the active enzyme involves a self-maturation process in which the active site pyruvoyl group is generated from an internal serine residue via an autocatalytic post-translational modification. Two non-identical subunits are generated from the proenzyme in this reaction, and the pyruvate is formed at the N-terminus of the alpha chain, which is derived from the carboxyl end of the proenzyme. The post-translation cleavage follows an unusual pathway, termed non-hydrolytic serinolysis, in which the side chain hydroxyl group of the serine supplies its oxygen atom to form the C-terminus of the beta chain, while the remainder of the serine residue undergoes an oxidative deamination to produce ammonia and the pyruvoyl prosthetic group on the alpha chain.

The protein resides in the cell membrane. It catalyses the reaction a 1,2-diacyl-sn-glycero-3-phospho-L-serine + H(+) = a 1,2-diacyl-sn-glycero-3-phosphoethanolamine + CO2. The protein operates within phospholipid metabolism; phosphatidylethanolamine biosynthesis; phosphatidylethanolamine from CDP-diacylglycerol: step 2/2. Functionally, catalyzes the formation of phosphatidylethanolamine (PtdEtn) from phosphatidylserine (PtdSer). This is Phosphatidylserine decarboxylase proenzyme from Brucella anthropi (strain ATCC 49188 / DSM 6882 / CCUG 24695 / JCM 21032 / LMG 3331 / NBRC 15819 / NCTC 12168 / Alc 37) (Ochrobactrum anthropi).